A 258-amino-acid chain; its full sequence is Hydroxyacylglutathione hydrolase (258 aa).

Zn(2+)-binding residues include histidine 56, histidine 58, aspartate 60, histidine 61, histidine 112, aspartate 132, and histidine 170.

Belongs to the metallo-beta-lactamase superfamily. Glyoxalase II family. Monomer. The cofactor is Zn(2+).

It carries out the reaction an S-(2-hydroxyacyl)glutathione + H2O = a 2-hydroxy carboxylate + glutathione + H(+). The protein operates within secondary metabolite metabolism; methylglyoxal degradation; (R)-lactate from methylglyoxal: step 2/2. Thiolesterase that catalyzes the hydrolysis of S-D-lactoyl-glutathione to form glutathione and D-lactic acid. This is Hydroxyacylglutathione hydrolase from Pseudomonas aeruginosa (strain ATCC 15692 / DSM 22644 / CIP 104116 / JCM 14847 / LMG 12228 / 1C / PRS 101 / PAO1).